A 236-amino-acid polypeptide reads, in one-letter code: Probable transcriptional regulatory protein Suden_1389 (236 aa).

Belongs to the TACO1 family.

It localises to the cytoplasm. The sequence is that of Probable transcriptional regulatory protein Suden_1389 from Sulfurimonas denitrificans (strain ATCC 33889 / DSM 1251) (Thiomicrospira denitrificans (strain ATCC 33889 / DSM 1251)).